A 488-amino-acid polypeptide reads, in one-letter code: Probable 26S proteasome non-ATPase regulatory subunit 3 (488 aa).

Residues 1–20 form a disordered region; the sequence is MTQDVEMKEQAAPPSNSLSS. The PCI domain occupies 240 to 421; sequence SRYLFYLGKI…GWMVSKETGD (182 aa). Residues 452–488 form a disordered region; sequence FPPNSHKEKESAEKRRERQQQEQELAKHIAEEDDDDF. The segment covering 456–481 has biased composition (basic and acidic residues); that stretch reads SHKEKESAEKRRERQQQEQELAKHIA.

Belongs to the proteasome subunit S3 family. In terms of assembly, the 26S proteasome is composed of a core protease, known as the 20S proteasome, capped at one or both ends by the 19S regulatory complex (RC). The RC is composed of at least 18 different subunits in two subcomplexes, the base and the lid, which form the portions proximal and distal to the 20S proteolytic core, respectively.

The protein localises to the nucleus. Its function is as follows. Acts as a regulatory subunit of the 26 proteasome which is involved in the ATP-dependent degradation of ubiquitinated proteins. The chain is Probable 26S proteasome non-ATPase regulatory subunit 3 (21D7) from Nicotiana tabacum (Common tobacco).